The following is a 519-amino-acid chain: Cytosol aminopeptidase (519 aa).

S42 carries the phosphoserine modification. K45 is subject to N6-succinyllysine. The residue at position 54 (S54) is a Phosphoserine. N6-succinyllysine is present on residues K61 and K103. 2 positions are modified to phosphoserine: S180 and S194. Residues L202, M203, and T205 each coordinate Zn(2+). Phosphoserine is present on S238. Residues K282 and D287 each coordinate Zn(2+). Positions 282, 287, 292, and 294 each coordinate substrate. Residue D287 participates in Mg(2+) binding. K294 is an active-site residue. Positions 303, 305, 364, and 366 each coordinate Zn(2+). The substrate site is built by D305 and D364. Residues D364 and E366 each coordinate Mg(2+). Residue R368 is part of the active site. K455 carries the post-translational modification N6-acetyllysine; alternate. The residue at position 455 (K455) is an N6-succinyllysine; alternate. At K476 the chain carries N6-succinyllysine. K489 carries the post-translational modification N6-acetyllysine; alternate. K489 is modified (N6-succinyllysine; alternate).

Belongs to the peptidase M17 family. In terms of assembly, homohexamer. Requires Zn(2+) as cofactor. Mn(2+) serves as cofactor.

It is found in the cytoplasm. The enzyme catalyses Release of an N-terminal amino acid, Xaa-|-Yaa-, in which Xaa is preferably Leu, but may be other amino acids including Pro although not Arg or Lys, and Yaa may be Pro. Amino acid amides and methyl esters are also readily hydrolyzed, but rates on arylamides are exceedingly low.. The catalysed reaction is an S-substituted L-cysteinylglycine + H2O = an S-substituted L-cysteine + glycine. It catalyses the reaction L-cysteinylglycine + H2O = L-cysteine + glycine. It carries out the reaction S-benzyl-L-cysteinylglycine + H2O = S-benzyl-L-cysteine + glycine. The enzyme catalyses Release of N-terminal proline from a peptide.. With respect to regulation, zofenoprilat inhibits Cys-Gly hydrolysis activity. Cytosolic metallopeptidase that catalyzes the removal of unsubstituted N-terminal hydrophobic amino acids from various peptides. The presence of Zn(2+) ions is essential for the peptidase activity, and the association with other cofactors can modulate the substrate spectificity of the enzyme. For instance, in the presence of Mn(2+), it displays a specific Cys-Gly hydrolyzing activity of Cys-Gly-S-conjugates. Involved in the metabolism of glutathione and in the degradation of glutathione S-conjugates, which may play a role in the control of the cell redox status. In Bos taurus (Bovine), this protein is Cytosol aminopeptidase.